Reading from the N-terminus, the 287-residue chain is ATP synthase gamma chain (287 aa).

This sequence belongs to the ATPase gamma chain family. In terms of assembly, F-type ATPases have 2 components, CF(1) - the catalytic core - and CF(0) - the membrane proton channel. CF(1) has five subunits: alpha(3), beta(3), gamma(1), delta(1), epsilon(1). CF(0) has three main subunits: a, b and c.

Its subcellular location is the cell inner membrane. In terms of biological role, produces ATP from ADP in the presence of a proton gradient across the membrane. The gamma chain is believed to be important in regulating ATPase activity and the flow of protons through the CF(0) complex. The protein is ATP synthase gamma chain of Ectopseudomonas mendocina (strain ymp) (Pseudomonas mendocina).